Reading from the N-terminus, the 197-residue chain is Peptidyl-tRNA hydrolase (197 aa).

A tRNA-binding site is contributed by tyrosine 17. The active-site Proton acceptor is the histidine 22. TRNA-binding residues include phenylalanine 68, asparagine 70, and asparagine 116.

It belongs to the PTH family. Monomer.

The protein localises to the cytoplasm. The enzyme catalyses an N-acyl-L-alpha-aminoacyl-tRNA + H2O = an N-acyl-L-amino acid + a tRNA + H(+). Functionally, hydrolyzes ribosome-free peptidyl-tRNAs (with 1 or more amino acids incorporated), which drop off the ribosome during protein synthesis, or as a result of ribosome stalling. In terms of biological role, catalyzes the release of premature peptidyl moieties from peptidyl-tRNA molecules trapped in stalled 50S ribosomal subunits, and thus maintains levels of free tRNAs and 50S ribosomes. This Yersinia enterocolitica serotype O:8 / biotype 1B (strain NCTC 13174 / 8081) protein is Peptidyl-tRNA hydrolase.